The following is a 349-amino-acid chain: Glycerol-3-phosphate dehydrogenase [NAD(P)+] (349 aa).

W20, R43, R44, and K117 together coordinate NADPH. Residues K117 and G147 each contribute to the sn-glycerol 3-phosphate site. A151 provides a ligand contact to NADPH. Positions 202, 255, 265, 266, and 267 each coordinate sn-glycerol 3-phosphate. The Proton acceptor role is filled by K202. Residue R266 coordinates NADPH. NADPH contacts are provided by V297 and E299.

This sequence belongs to the NAD-dependent glycerol-3-phosphate dehydrogenase family.

Its subcellular location is the cytoplasm. The catalysed reaction is sn-glycerol 3-phosphate + NAD(+) = dihydroxyacetone phosphate + NADH + H(+). It carries out the reaction sn-glycerol 3-phosphate + NADP(+) = dihydroxyacetone phosphate + NADPH + H(+). Its pathway is membrane lipid metabolism; glycerophospholipid metabolism. In terms of biological role, catalyzes the reduction of the glycolytic intermediate dihydroxyacetone phosphate (DHAP) to sn-glycerol 3-phosphate (G3P), the key precursor for phospholipid synthesis. This chain is Glycerol-3-phosphate dehydrogenase [NAD(P)+], found in Mycobacterium leprae (strain TN).